A 113-amino-acid chain; its full sequence is Cell cycle protein GpsB (113 aa).

Positions 37 to 63 (KDYETYATLVKSLRQEIADLKEELTRK) form a coiled coil. The interval 61 to 82 (TRKPQVSSAPSPSHPDPIDVAA) is disordered.

The protein belongs to the GpsB family. Forms polymers through the coiled coil domains. Interacts with PBP1, MreC and EzrA.

It is found in the cytoplasm. Divisome component that associates with the complex late in its assembly, after the Z-ring is formed, and is dependent on DivIC and PBP2B for its recruitment to the divisome. Together with EzrA, is a key component of the system that regulates PBP1 localization during cell cycle progression. Its main role could be the removal of PBP1 from the cell pole after pole maturation is completed. Also contributes to the recruitment of PBP1 to the division complex. Not essential for septum formation. This Streptococcus pneumoniae (strain ATCC 700669 / Spain 23F-1) protein is Cell cycle protein GpsB.